The following is a 92-amino-acid chain: Small ribosomal subunit protein uS19 (92 aa).

Belongs to the universal ribosomal protein uS19 family.

Its function is as follows. Protein S19 forms a complex with S13 that binds strongly to the 16S ribosomal RNA. This chain is Small ribosomal subunit protein uS19, found in Bradyrhizobium sp. (strain BTAi1 / ATCC BAA-1182).